Reading from the N-terminus, the 205-residue chain is Cell wall / vacuolar inhibitor of fructosidase 1 (205 aa).

Residues 1 to 23 (MKMMKVMMLIVMMMMVMVMVSEG) form the signal peptide. 2 cysteine pairs are disulfide-bonded: Cys30–Cys39 and Cys93–Cys134. Residues Asn139 and Asn156 are each glycosylated (N-linked (GlcNAc...) asparagine).

It belongs to the PMEI family. In terms of tissue distribution, mostly expressed in roots, senescent leaves and flowers (in sepals), and, to a lower extent, in stems, specifically in the vascular tissues (e.g. in the phloem).

It localises to the vacuole. In terms of biological role, inhibits fructosidases from vacuoles (vacuolar invertase VI). This chain is Cell wall / vacuolar inhibitor of fructosidase 1 (C/VIF1), found in Arabidopsis thaliana (Mouse-ear cress).